We begin with the raw amino-acid sequence, 252 residues long: uncharacterized protein (252 aa).

An ATP-binding site is contributed by 28-35 (GCDGTGKS).

The protein to E.coli YghS and YghT.

This is an uncharacterized protein from Escherichia coli O6:H1 (strain CFT073 / ATCC 700928 / UPEC).